The following is a 66-amino-acid chain: Large ribosomal subunit protein uL29 (66 aa).

It belongs to the universal ribosomal protein uL29 family.

The protein is Large ribosomal subunit protein uL29 of Thermotoga neapolitana (strain ATCC 49049 / DSM 4359 / NBRC 107923 / NS-E).